Here is a 289-residue protein sequence, read N- to C-terminus: 3-methyl-2-oxobutanoate hydroxymethyltransferase (289 aa).

Asp-50 and Asp-89 together coordinate Mg(2+). 3-methyl-2-oxobutanoate contacts are provided by residues 50–51, Asp-89, and Lys-119; that span reads DS. Glu-121 is a Mg(2+) binding site. Glu-188 serves as the catalytic Proton acceptor. Residues 266 to 289 form a disordered region; that stretch reads AQHSFGMPEDEQRRWEENVSGADD.

Belongs to the PanB family. In terms of assembly, homodecamer; pentamer of dimers. Mg(2+) serves as cofactor.

Its subcellular location is the cytoplasm. The enzyme catalyses 3-methyl-2-oxobutanoate + (6R)-5,10-methylene-5,6,7,8-tetrahydrofolate + H2O = 2-dehydropantoate + (6S)-5,6,7,8-tetrahydrofolate. It participates in cofactor biosynthesis; (R)-pantothenate biosynthesis; (R)-pantoate from 3-methyl-2-oxobutanoate: step 1/2. In terms of biological role, catalyzes the reversible reaction in which hydroxymethyl group from 5,10-methylenetetrahydrofolate is transferred onto alpha-ketoisovalerate to form ketopantoate. This Oleidesulfovibrio alaskensis (strain ATCC BAA-1058 / DSM 17464 / G20) (Desulfovibrio alaskensis) protein is 3-methyl-2-oxobutanoate hydroxymethyltransferase.